We begin with the raw amino-acid sequence, 207 residues long: Urease accessory protein UreG (207 aa).

16–23 (GPVGSGKT) provides a ligand contact to GTP.

Belongs to the SIMIBI class G3E GTPase family. UreG subfamily. As to quaternary structure, homodimer. UreD, UreF and UreG form a complex that acts as a GTP-hydrolysis-dependent molecular chaperone, activating the urease apoprotein by helping to assemble the nickel containing metallocenter of UreC. The UreE protein probably delivers the nickel.

The protein localises to the cytoplasm. Its function is as follows. Facilitates the functional incorporation of the urease nickel metallocenter. This process requires GTP hydrolysis, probably effectuated by UreG. This is Urease accessory protein UreG from Cupriavidus metallidurans (strain ATCC 43123 / DSM 2839 / NBRC 102507 / CH34) (Ralstonia metallidurans).